The following is a 352-amino-acid chain: Selenide, water dikinase (352 aa).

C23 is an active-site residue. ATP contacts are provided by residues K26 and 54–56; that span reads SRD. D57 contacts Mg(2+). ATP-binding positions include D74, D97, and 145–147; that span reads GHS. Residue D97 coordinates Mg(2+). Position 233 (D233) interacts with Mg(2+).

This sequence belongs to the selenophosphate synthase 1 family. Class I subfamily. Homodimer. Requires Mg(2+) as cofactor.

The enzyme catalyses hydrogenselenide + ATP + H2O = selenophosphate + AMP + phosphate + 2 H(+). Its function is as follows. Synthesizes selenophosphate from selenide and ATP. This chain is Selenide, water dikinase, found in Shewanella sp. (strain MR-7).